We begin with the raw amino-acid sequence, 485 residues long: Ulvan lyase (485 aa).

The N-terminal stretch at 1 to 33 (MIRNDTMLKGQFVLKKTQIALSAALMGSVLLTG) is a signal peptide. C34 carries N-palmitoyl cysteine lipidation. C34 is lipidated: S-diacylglycerol cysteine. N64 and N126 together coordinate substrate. The tract at residues 108–128 (FKAGTSELGRRDGGKKFDNHG) is disordered. Over residues 115 to 128 (LGRRDGGKKFDNHG) the composition is skewed to basic and acidic residues. H127 acts as the Proton donor in catalysis. 2 residues coordinate substrate: K129 and H147. Y192 serves as the catalytic Proton acceptor. The substrate site is built by R208, H212, and Y250. A Zn(2+)-binding site is contributed by H212. Residues H268, C270, and H282 each contribute to the Zn(2+) site. Residue H282 participates in substrate binding.

Belongs to the polysaccharide lyase 25 family.

Its subcellular location is the cell membrane. Its function is as follows. Ulvan lyase involved in ulvan degradation. Ulvan is the main polysaccharide component of the Ulvales (green seaweed) cell wall. It is composed of disaccharide building blocks comprising 3-sulfated rhamnose (Rha3S) linked to D-glucuronic acid (GlcA), L-iduronic acid (IduA), or D-xylose (Xyl). Ulvan lyase catalyzes the endolytic cleavage of the glycosidic bond between Rha3S and the uronic acids GlcA or IduA, producing oligosaccharides that have unsaturated 4-deoxy-L-threo-hex-4-enopyranosiduronic acid (deltaUA) at the non-reducing end. This results eventually in the degradation of the ulvan polysaccharide into deltaUA-Rha3S disaccharides and deltaUA-Rha3S-Xyl-Rha3S tetrasaccharides. This is Ulvan lyase from Alteromonas sp. (strain LOR).